The following is a 633-amino-acid chain: MSATSSKETLGFQAEVKQLLQLMIHSLYSNKDIFLRELISNASDAADKLRFEALSDAALFENDPELKIRIAFDRDARTLTISDNGIGMSRQEVIDHIGTIAKSGTREFFSQLSGDQKKDAALIGQFGVGFYSAFIVADRVTLTTRRAGLTAEHGVRWESEGAGDYTLETVEKPQRGTEIVLHLREGEDEFLSDWKIKSVIRTYSDHITLPIVMKKTEWKDGVETPTDEDETVNKASALWARPKKDISDDEYNEFYKHVAHDFEPPLAWSHNRVEGKQEYISLLYVPSHAPFDLYDREKRHGIKLYVRRVFIMDDAEQLMPQYLRFVRGVIDSADLPLNVSREILQSSRDIDAIKNGSVKKVLGMLEDLAENQPEKYVEFWKEFGKVMKEGPGEDFANKEKIAGLLRFASTHTDTDAQVVSLKDYVGRMKEGQTAIYYITADSFAAAQHSPHLEIFRKKGIEVLLLSDRVDEWLTGNLHEFDGKPLKSVAKGGLDLGELEDEAEKTAQKEAEESMKPLVERIKAMLGERVKDVRVTHRLTDSPACLVTGEGDMSANLERLLKAAGQAAPTVKPTLEINPSHALVTRLDSESDEDRFKDWANLLFEQALLAEGGQLDDPASFVRRLNGLLAMLPG.

The segment at 1–341 (MSATSSKETL…SADLPLNVSR (341 aa)) is a; substrate-binding. The tract at residues 342–558 (EILQSSRDID…EGDMSANLER (217 aa)) is b. A c region spans residues 559 to 633 (LLKAAGQAAP…LNGLLAMLPG (75 aa)).

It belongs to the heat shock protein 90 family. In terms of assembly, homodimer.

The protein localises to the cytoplasm. Its function is as follows. Molecular chaperone. Has ATPase activity. In Thiobacillus denitrificans (strain ATCC 25259 / T1), this protein is Chaperone protein HtpG.